Consider the following 276-residue polypeptide: SKA complex subunit 1 homolog (276 aa).

The stretch at 48–78 (VDVSLTAMEAQLQAVRRRLQEEREAFPKAKK) forms a coiled coil.

This sequence belongs to the SKA1 family.

In Oryza sativa subsp. japonica (Rice), this protein is SKA complex subunit 1 homolog.